The following is a 494-amino-acid chain: ATP-dependent RNA helicase HAS1 (494 aa).

The interval 1 to 23 is disordered; the sequence is MAQTKRSRDESEKEEVVVKADVE. The short motif at 29 to 57 is the Q motif element; sequence HSFKSLNLSQPTMRAIEKMGFSKMTPVQA. The region spanning 60–236 is the Helicase ATP-binding domain; sequence IPPLMAGRDV…RISLRPGPLF (177 aa). Position 73–80 (73–80) interacts with ATP; that stretch reads AKTGSGKT. The DEAD box motif lies at 183 to 186; the sequence is DEAD. The region spanning 250 to 420 is the Helicase C-terminal domain; the sequence is GLEQGYVVCE…NVQSQLEKLI (171 aa). Residues 262–278 carry the Bipartite nuclear localization signal motif; that stretch reads KRFLLLFSFLKRNQKKK.

The protein belongs to the DEAD box helicase family. DDX18/HAS1 subfamily. Associates in the nucleolus with the 60S and pre-60S ribosomal subunits.

The protein localises to the nucleus. The protein resides in the nucleolus. The catalysed reaction is ATP + H2O = ADP + phosphate + H(+). ATP-dependent RNA helicase involved in 40S ribosomal subunit biogenesis. Required for the processing and cleavage of 35S pre-rRNA at sites A0, A1, and A2, leading to mature 18S rRNA. This chain is ATP-dependent RNA helicase HAS1 (HAS1), found in Candida glabrata (strain ATCC 2001 / BCRC 20586 / JCM 3761 / NBRC 0622 / NRRL Y-65 / CBS 138) (Yeast).